Consider the following 83-residue polypeptide: Small ribosomal subunit protein uS19m (83 aa).

This sequence belongs to the universal ribosomal protein uS19 family.

It is found in the mitochondrion. This chain is Small ribosomal subunit protein uS19m (RPS19), found in Tetraselmis subcordiformis (Marine green alga).